Here is a 78-residue protein sequence, read N- to C-terminus: Large ribosomal subunit protein bL28 (78 aa).

Belongs to the bacterial ribosomal protein bL28 family.

This Pectobacterium atrosepticum (strain SCRI 1043 / ATCC BAA-672) (Erwinia carotovora subsp. atroseptica) protein is Large ribosomal subunit protein bL28.